Consider the following 142-residue polypeptide: Large ribosomal subunit protein bL19 (142 aa).

It belongs to the bacterial ribosomal protein bL19 family.

In terms of biological role, this protein is located at the 30S-50S ribosomal subunit interface and may play a role in the structure and function of the aminoacyl-tRNA binding site. This is Large ribosomal subunit protein bL19 from Rickettsia bellii (strain OSU 85-389).